The sequence spans 82 residues: Putative membrane protein insertion efficiency factor (82 aa).

This sequence belongs to the UPF0161 family.

It is found in the cell inner membrane. Its function is as follows. Could be involved in insertion of integral membrane proteins into the membrane. The sequence is that of Putative membrane protein insertion efficiency factor from Rickettsia typhi (strain ATCC VR-144 / Wilmington).